Consider the following 353-residue polypeptide: NADH-quinone oxidoreductase subunit H (353 aa).

9 consecutive transmembrane segments (helical) span residues 8–28 (LLVY…IFIW), 75–95 (GVFW…FAAI), 108–128 (IGIL…FMAG), 148–168 (VSYE…TGSL), 179–199 (VPFI…AMAE), 229–249 (LFYL…TTLF), 258–278 (LHPV…IIWV), 297–317 (FLLP…LIAP), and 319–339 (INTA…VLLF).

The protein belongs to the complex I subunit 1 family. As to quaternary structure, NDH-1 is composed of 14 different subunits. Subunits NuoA, H, J, K, L, M, N constitute the membrane sector of the complex.

It is found in the cell membrane. The enzyme catalyses a quinone + NADH + 5 H(+)(in) = a quinol + NAD(+) + 4 H(+)(out). Its function is as follows. NDH-1 shuttles electrons from NADH, via FMN and iron-sulfur (Fe-S) centers, to quinones in the respiratory chain. The immediate electron acceptor for the enzyme in this species is believed to be ubiquinone. Couples the redox reaction to proton translocation (for every two electrons transferred, four hydrogen ions are translocated across the cytoplasmic membrane), and thus conserves the redox energy in a proton gradient. This subunit may bind ubiquinone. The polypeptide is NADH-quinone oxidoreductase subunit H (Dehalococcoides mccartyi (strain CBDB1)).